We begin with the raw amino-acid sequence, 1798 residues long: DNA polymerase II large subunit (1798 aa).

The tract at residues 286–309 (EKGKSSEENKDESKAEDTGTESVA) is disordered. Residues 1184 to 1319 (VVGYYLAEGY…ETLLLAKFGI (136 aa)) enclose the DOD-type homing endonuclease domain. Residues 1699–1798 (TGHSNGKNGY…GISLDEFFGS (100 aa)) form a disordered region. Positions 1714–1731 (GKNGKASKKSGSLASKLS) are enriched in low complexity. Over residues 1733 to 1753 (KGKEPSKKKESAKPKRSEKVK) the composition is skewed to basic and acidic residues.

It belongs to the archaeal DNA polymerase II family. Heterodimer of a large subunit and a small subunit. In terms of processing, this protein undergoes a protein self splicing that involves a post-translational excision of the intervening region (intein) followed by peptide ligation.

The catalysed reaction is DNA(n) + a 2'-deoxyribonucleoside 5'-triphosphate = DNA(n+1) + diphosphate. It catalyses the reaction Exonucleolytic cleavage in the 3'- to 5'-direction to yield nucleoside 5'-phosphates.. Possesses two activities: a DNA synthesis (polymerase) and an exonucleolytic activity that degrades single-stranded DNA in the 3'- to 5'-direction. Has a template-primer preference which is characteristic of a replicative DNA polymerase. The protein is DNA polymerase II large subunit (polC) of Thermococcus kodakarensis (strain ATCC BAA-918 / JCM 12380 / KOD1) (Pyrococcus kodakaraensis (strain KOD1)).